The primary structure comprises 120 residues: Large ribosomal subunit protein uL24 (120 aa).

It belongs to the universal ribosomal protein uL24 family. As to quaternary structure, part of the 50S ribosomal subunit.

In terms of biological role, one of two assembly initiator proteins, it binds directly to the 5'-end of the 23S rRNA, where it nucleates assembly of the 50S subunit. Functionally, one of the proteins that surrounds the polypeptide exit tunnel on the outside of the subunit. The chain is Large ribosomal subunit protein uL24 from Pseudarthrobacter chlorophenolicus (strain ATCC 700700 / DSM 12829 / CIP 107037 / JCM 12360 / KCTC 9906 / NCIMB 13794 / A6) (Arthrobacter chlorophenolicus).